The chain runs to 232 residues: Phosphatidylserine decarboxylase proenzyme (232 aa).

The active-site Schiff-base intermediate with substrate; via pyruvic acid is the serine 190. Serine 190 carries the post-translational modification Pyruvic acid (Ser); by autocatalysis.

Belongs to the phosphatidylserine decarboxylase family. PSD-A subfamily. As to quaternary structure, heterodimer of a large membrane-associated beta subunit and a small pyruvoyl-containing alpha subunit. Pyruvate serves as cofactor. In terms of processing, is synthesized initially as an inactive proenzyme. Formation of the active enzyme involves a self-maturation process in which the active site pyruvoyl group is generated from an internal serine residue via an autocatalytic post-translational modification. Two non-identical subunits are generated from the proenzyme in this reaction, and the pyruvate is formed at the N-terminus of the alpha chain, which is derived from the carboxyl end of the proenzyme. The post-translation cleavage follows an unusual pathway, termed non-hydrolytic serinolysis, in which the side chain hydroxyl group of the serine supplies its oxygen atom to form the C-terminus of the beta chain, while the remainder of the serine residue undergoes an oxidative deamination to produce ammonia and the pyruvoyl prosthetic group on the alpha chain.

It localises to the cell membrane. The catalysed reaction is a 1,2-diacyl-sn-glycero-3-phospho-L-serine + H(+) = a 1,2-diacyl-sn-glycero-3-phosphoethanolamine + CO2. Its pathway is phospholipid metabolism; phosphatidylethanolamine biosynthesis; phosphatidylethanolamine from CDP-diacylglycerol: step 2/2. In terms of biological role, catalyzes the formation of phosphatidylethanolamine (PtdEtn) from phosphatidylserine (PtdSer). In Rhodopseudomonas palustris (strain BisA53), this protein is Phosphatidylserine decarboxylase proenzyme.